A 118-amino-acid chain; its full sequence is NAD(P)H-quinone oxidoreductase subunit M (118 aa).

It belongs to the complex I NdhM subunit family. NDH-1 can be composed of about 15 different subunits; different subcomplexes with different compositions have been identified which probably have different functions.

It localises to the cellular thylakoid membrane. It carries out the reaction a plastoquinone + NADH + (n+1) H(+)(in) = a plastoquinol + NAD(+) + n H(+)(out). The catalysed reaction is a plastoquinone + NADPH + (n+1) H(+)(in) = a plastoquinol + NADP(+) + n H(+)(out). NDH-1 shuttles electrons from an unknown electron donor, via FMN and iron-sulfur (Fe-S) centers, to quinones in the respiratory and/or the photosynthetic chain. The immediate electron acceptor for the enzyme in this species is believed to be plastoquinone. Couples the redox reaction to proton translocation, and thus conserves the redox energy in a proton gradient. Cyanobacterial NDH-1 also plays a role in inorganic carbon-concentration. The sequence is that of NAD(P)H-quinone oxidoreductase subunit M from Trichormus variabilis (strain ATCC 29413 / PCC 7937) (Anabaena variabilis).